Consider the following 1036-residue polypeptide: Protein translocase subunit SecA, chloroplastic (1036 aa).

The N-terminal 76 residues, 1-76 (MESCARSASQ…KIGELMQVRA (76 aa)), are a transit peptide targeting the chloroplast. 186-193 (MRTGEGKT) serves as a coordination point for ATP. The interval 995–1036 (NQEQQQKGKPDSSNVENKRIGDANLNPVSVTESPSSDSPQNT) is disordered. Residues 1000–1015 (QKGKPDSSNVENKRIG) show a composition bias toward basic and acidic residues. Residues 1020-1036 (NPVSVTESPSSDSPQNT) are compositionally biased toward polar residues.

This sequence belongs to the SecA family.

It is found in the plastid. It localises to the chloroplast stroma. The protein localises to the chloroplast thylakoid membrane. It catalyses the reaction ATP + H2O + chloroplast-proteinSide 1 = ADP + phosphate + chloroplast-proteinSide 2.. Has a central role in coupling the hydrolysis of ATP to the transfer of proteins across the thylakoid membrane. In Spinacia oleracea (Spinach), this protein is Protein translocase subunit SecA, chloroplastic.